A 137-amino-acid polypeptide reads, in one-letter code: Basic phospholipase A2 2 (137 aa).

A signal peptide spans 1–11; that stretch reads LVAVCVSLLGA. The propeptide occupies 12–19; it reads ANIPPQPL. Intrachain disulfides connect cysteine 30–cysteine 89, cysteine 44–cysteine 136, cysteine 46–cysteine 62, cysteine 61–cysteine 117, cysteine 68–cysteine 110, cysteine 78–cysteine 103, and cysteine 96–cysteine 108. Residues tyrosine 45 and glycine 47 each coordinate Ca(2+). An alpha-D-mannopyranose-binding site is contributed by tyrosine 48. Glycine 49 is a Ca(2+) binding site. Histidine 65 is an active-site residue. Aspartate 66 is a Ca(2+) binding site. Aspartate 66 lines the alpha-D-mannopyranose pocket. The active site involves aspartate 111.

Belongs to the phospholipase A2 family. Group I subfamily. D49 sub-subfamily. Homodimer; non-covalently linked. Ca(2+) serves as cofactor. In terms of processing, homodimerization and interaction of the catalytically important Asp-49 (here Asp-111) with mannose molecules may render this protein inactive. Expressed by the venom gland.

Its subcellular location is the secreted. The catalysed reaction is a 1,2-diacyl-sn-glycero-3-phosphocholine + H2O = a 1-acyl-sn-glycero-3-phosphocholine + a fatty acid + H(+). Its function is as follows. Snake venom phospholipase A2 (PLA2) that shows anticoagulant and neurotoxic activities. In terms of biological role, PLA2 catalyzes the calcium-dependent hydrolysis of the 2-acyl groups in 3-sn-phosphoglycerides. This is Basic phospholipase A2 2 from Bungarus caeruleus (Indian krait).